The chain runs to 226 residues: 7-cyano-7-deazaguanine synthase (226 aa).

ATP is bound at residue Phe10 to Ala20. Zn(2+) contacts are provided by Cys190, Cys205, Cys208, and Cys211.

This sequence belongs to the QueC family. Zn(2+) is required as a cofactor.

It catalyses the reaction 7-carboxy-7-deazaguanine + NH4(+) + ATP = 7-cyano-7-deazaguanine + ADP + phosphate + H2O + H(+). It participates in purine metabolism; 7-cyano-7-deazaguanine biosynthesis. Its function is as follows. Catalyzes the ATP-dependent conversion of 7-carboxy-7-deazaguanine (CDG) to 7-cyano-7-deazaguanine (preQ(0)). The sequence is that of 7-cyano-7-deazaguanine synthase from Helicobacter pylori (strain Shi470).